The sequence spans 408 residues: Dual-specificity RNA methyltransferase RlmN (408 aa).

The Proton acceptor role is filled by E93. A Radical SAM core domain is found at 99–379 (ETNRGTLCIS…TTTRKTRGDD (281 aa)). Cysteines 106 and 384 form a disulfide. 3 residues coordinate [4Fe-4S] cluster: C113, C117, and C120. The tract at residues 152 to 196 (SPAGSKDGDGGPDHASRATKLDHRAADAKGVQSDSWRSSDPEEDH) is disordered. The span at 157-178 (KDGDGGPDHASRATKLDHRAAD) shows a compositional bias: basic and acidic residues. S-adenosyl-L-methionine contacts are provided by residues 210 to 211 (GE), S242, 264 to 266 (SLH), and N341. C384 (S-methylcysteine intermediate) is an active-site residue.

It belongs to the radical SAM superfamily. RlmN family. It depends on [4Fe-4S] cluster as a cofactor.

Its subcellular location is the cytoplasm. It catalyses the reaction adenosine(2503) in 23S rRNA + 2 reduced [2Fe-2S]-[ferredoxin] + 2 S-adenosyl-L-methionine = 2-methyladenosine(2503) in 23S rRNA + 5'-deoxyadenosine + L-methionine + 2 oxidized [2Fe-2S]-[ferredoxin] + S-adenosyl-L-homocysteine. The catalysed reaction is adenosine(37) in tRNA + 2 reduced [2Fe-2S]-[ferredoxin] + 2 S-adenosyl-L-methionine = 2-methyladenosine(37) in tRNA + 5'-deoxyadenosine + L-methionine + 2 oxidized [2Fe-2S]-[ferredoxin] + S-adenosyl-L-homocysteine. Specifically methylates position 2 of adenine 2503 in 23S rRNA and position 2 of adenine 37 in tRNAs. m2A2503 modification seems to play a crucial role in the proofreading step occurring at the peptidyl transferase center and thus would serve to optimize ribosomal fidelity. This chain is Dual-specificity RNA methyltransferase RlmN, found in Aromatoleum aromaticum (strain DSM 19018 / LMG 30748 / EbN1) (Azoarcus sp. (strain EbN1)).